The following is a 612-amino-acid chain: UvrABC system protein C (612 aa).

Residues 20 to 98 enclose the GIY-YIG domain; the sequence is THSGVYRMLD…IKQHRPKYNI (79 aa). In terms of domain architecture, UVR spans 208–243; the sequence is SSVLEEISAKMYQASEDMEYEKAQVYRDQLVVLRKL.

This sequence belongs to the UvrC family. In terms of assembly, interacts with UvrB in an incision complex.

The protein localises to the cytoplasm. In terms of biological role, the UvrABC repair system catalyzes the recognition and processing of DNA lesions. UvrC both incises the 5' and 3' sides of the lesion. The N-terminal half is responsible for the 3' incision and the C-terminal half is responsible for the 5' incision. The protein is UvrABC system protein C of Francisella tularensis subsp. tularensis (strain FSC 198).